Here is a 582-residue protein sequence, read N- to C-terminus: Aspartate--tRNA ligase (582 aa).

The aspartate stretch occupies residues 198–201 (QIFK). R220 provides a ligand contact to L-aspartate. Residues 220–222 (RDE) and Q229 each bind ATP. H445 lines the L-aspartate pocket. E479 is a binding site for ATP. R486 contributes to the L-aspartate binding site. 531–534 (GFDR) provides a ligand contact to ATP.

It belongs to the class-II aminoacyl-tRNA synthetase family. Type 1 subfamily. In terms of assembly, homodimer.

It localises to the cytoplasm. It carries out the reaction tRNA(Asp) + L-aspartate + ATP = L-aspartyl-tRNA(Asp) + AMP + diphosphate. Its function is as follows. Catalyzes the attachment of L-aspartate to tRNA(Asp) in a two-step reaction: L-aspartate is first activated by ATP to form Asp-AMP and then transferred to the acceptor end of tRNA(Asp). The polypeptide is Aspartate--tRNA ligase (Amoebophilus asiaticus (strain 5a2)).